The primary structure comprises 83 residues: Exodeoxyribonuclease 7 small subunit (83 aa).

This sequence belongs to the XseB family. As to quaternary structure, heterooligomer composed of large and small subunits.

Its subcellular location is the cytoplasm. The catalysed reaction is Exonucleolytic cleavage in either 5'- to 3'- or 3'- to 5'-direction to yield nucleoside 5'-phosphates.. Functionally, bidirectionally degrades single-stranded DNA into large acid-insoluble oligonucleotides, which are then degraded further into small acid-soluble oligonucleotides. The polypeptide is Exodeoxyribonuclease 7 small subunit (Brucella melitensis biotype 1 (strain ATCC 23456 / CCUG 17765 / NCTC 10094 / 16M)).